We begin with the raw amino-acid sequence, 242 residues long: Basic agglutinin (242 aa).

2 N-linked (GlcNAc...) asparagine glycosylation sites follow: Asn45 and Asn220.

Belongs to the leguminous lectin family.

Its function is as follows. Lectin. This Psophocarpus tetragonolobus (Winged bean) protein is Basic agglutinin (WBAI).